The primary structure comprises 252 residues: Triosephosphate isomerase (252 aa).

A substrate-binding site is contributed by 10–12 (NWK). Catalysis depends on His96, which acts as the Electrophile. Catalysis depends on Glu168, which acts as the Proton acceptor. Residues Gly174, Ser213, and 234-235 (GG) contribute to the substrate site.

This sequence belongs to the triosephosphate isomerase family. Homodimer.

Its subcellular location is the cytoplasm. The enzyme catalyses D-glyceraldehyde 3-phosphate = dihydroxyacetone phosphate. It functions in the pathway carbohydrate biosynthesis; gluconeogenesis. It participates in carbohydrate degradation; glycolysis; D-glyceraldehyde 3-phosphate from glycerone phosphate: step 1/1. Its function is as follows. Involved in the gluconeogenesis. Catalyzes stereospecifically the conversion of dihydroxyacetone phosphate (DHAP) to D-glyceraldehyde-3-phosphate (G3P). This Idiomarina loihiensis (strain ATCC BAA-735 / DSM 15497 / L2-TR) protein is Triosephosphate isomerase.